Here is a 239-residue protein sequence, read N- to C-terminus: Ribonuclease PH (239 aa).

Phosphate is bound by residues R87 and G125 to R127.

Belongs to the RNase PH family. Homohexameric ring arranged as a trimer of dimers.

The enzyme catalyses tRNA(n+1) + phosphate = tRNA(n) + a ribonucleoside 5'-diphosphate. Phosphorolytic 3'-5' exoribonuclease that plays an important role in tRNA 3'-end maturation. Removes nucleotide residues following the 3'-CCA terminus of tRNAs; can also add nucleotides to the ends of RNA molecules by using nucleoside diphosphates as substrates, but this may not be physiologically important. Probably plays a role in initiation of 16S rRNA degradation (leading to ribosome degradation) during starvation. In Acaryochloris marina (strain MBIC 11017), this protein is Ribonuclease PH.